Reading from the N-terminus, the 544-residue chain is MKYIFVTGGVVSSLGKGVASASLGALLRARGYKVTAVKIDPYINIDAGTMRPYEHGECFVTASGAETDLDIGNYERFLDLDIPAGSNITTGQVYQEVIRKERAGDYLSQTVQVIPHVTDEIKRRIRAAGESAGAEIVLIEVGGTVGDIESLPFLEAIRQFRFDEGDDNVLYLHLTLVPYLGTSNEFKTKPTQHSVAALRSYGISPDIVMVRSKDKLPAEITRKIAAFTSVRENRVFSSYDVEHVYQVPLALEEQGLGKAVEELLGLEGTHPRLGVWTDAVRTIKHPKQQVTIAIAGKYTAMPDAYLSLMESLTHAGIANDARVNIKWVNAEQLAEAGAGELEGQFADVDGILVPGGFGIRGIEGKVKAAEYARTHGVPYLGICLGMQIAVIEYARHVAGIEDANSAEFDEYAKNKVIDLMPEQLEVAGMGGTMRLGDWPMELRAGTKIAELYGVPQGGTVKERHRHRYEVNPAYVEQLEAAGLTISGVTPGVEGRGAGLVETVEIADHPFFVALQAHPEFKSRPMRPSPPFAGFVKAALEHQQQ.

Positions 1 to 266 (MKYIFVTGGV…GKAVEELLGL (266 aa)) are amidoligase domain. Serine 12 contacts CTP. Residue serine 12 coordinates UTP. 13–18 (SLGKGV) is an ATP binding site. Residue tyrosine 53 coordinates L-glutamine. Position 70 (aspartate 70) interacts with ATP. Mg(2+) is bound by residues aspartate 70 and glutamate 140. CTP is bound by residues 147 to 149 (DIE), 187 to 192 (KTKPTQ), and lysine 223. Residues 187-192 (KTKPTQ) and lysine 223 contribute to the UTP site. A Glutamine amidotransferase type-1 domain is found at 291–544 (TIAIAGKYTA…VKAALEHQQQ (254 aa)). An L-glutamine-binding site is contributed by glycine 356. The Nucleophile; for glutamine hydrolysis role is filled by cysteine 383. L-glutamine-binding positions include 384–387 (LGMQ), glutamate 407, and arginine 467. Residues histidine 517 and glutamate 519 contribute to the active site.

This sequence belongs to the CTP synthase family. In terms of assembly, homotetramer.

The enzyme catalyses UTP + L-glutamine + ATP + H2O = CTP + L-glutamate + ADP + phosphate + 2 H(+). The catalysed reaction is L-glutamine + H2O = L-glutamate + NH4(+). It catalyses the reaction UTP + NH4(+) + ATP = CTP + ADP + phosphate + 2 H(+). The protein operates within pyrimidine metabolism; CTP biosynthesis via de novo pathway; CTP from UDP: step 2/2. Its activity is regulated as follows. Allosterically activated by GTP, when glutamine is the substrate; GTP has no effect on the reaction when ammonia is the substrate. The allosteric effector GTP functions by stabilizing the protein conformation that binds the tetrahedral intermediate(s) formed during glutamine hydrolysis. Inhibited by the product CTP, via allosteric rather than competitive inhibition. Functionally, catalyzes the ATP-dependent amination of UTP to CTP with either L-glutamine or ammonia as the source of nitrogen. Regulates intracellular CTP levels through interactions with the four ribonucleotide triphosphates. The chain is CTP synthase from Deinococcus radiodurans (strain ATCC 13939 / DSM 20539 / JCM 16871 / CCUG 27074 / LMG 4051 / NBRC 15346 / NCIMB 9279 / VKM B-1422 / R1).